A 241-amino-acid chain; its full sequence is Probable transcriptional regulatory protein azo0574 (241 aa).

A disordered region spans residues 1–21 (MAGHSKWANIQHRKGRQDAKR).

This sequence belongs to the TACO1 family.

It is found in the cytoplasm. The protein is Probable transcriptional regulatory protein azo0574 of Azoarcus sp. (strain BH72).